Here is a 257-residue protein sequence, read N- to C-terminus: Diaminopimelate epimerase (257 aa).

Positions 13, 46, and 66 each coordinate substrate. The active-site Proton donor is the cysteine 75. Substrate contacts are provided by residues 76 to 77, asparagine 145, asparagine 175, and 193 to 194; these read GN and ER. The Proton acceptor role is filled by cysteine 202. 203-204 contributes to the substrate binding site; it reads GS.

The protein belongs to the diaminopimelate epimerase family. Homodimer.

It is found in the cytoplasm. The enzyme catalyses (2S,6S)-2,6-diaminopimelate = meso-2,6-diaminopimelate. The protein operates within amino-acid biosynthesis; L-lysine biosynthesis via DAP pathway; DL-2,6-diaminopimelate from LL-2,6-diaminopimelate: step 1/1. Functionally, catalyzes the stereoinversion of LL-2,6-diaminopimelate (L,L-DAP) to meso-diaminopimelate (meso-DAP), a precursor of L-lysine and an essential component of the bacterial peptidoglycan. The sequence is that of Diaminopimelate epimerase from Gluconobacter oxydans (strain 621H) (Gluconobacter suboxydans).